The primary structure comprises 231 residues: Claudin-10 (231 aa).

Residues 1-21 (MASTASEIIAFMVSISGWVLV) form a helical membrane-spanning segment. The Extracellular segment spans residues 22-80 (SSTLPTDYWKVSTIDGTVITTATYWANLWKTCVTDSTGVSNCKDFPSMLALDGYIQACR). The chain crosses the membrane as a helical span at residues 81–101 (GLMIAAVSLGFFGSIFALIGM). The Cytoplasmic portion of the chain corresponds to 102–115 (KCTKVGGSDKAKAK). Residues 116-136 (IACLAGIVFILSGLCSMTGCS) form a helical membrane-spanning segment. The Extracellular segment spans residues 137-160 (LYANKITTEFFDPLFVEQKYELGA). A helical transmembrane segment spans residues 161 to 181 (ALFIGWAGASLCLIGGVIFCF). Residues 182 to 231 (SISDNNKAPRMGYTYNGATSVMSSRTKYHGREGDLKTPNPSKQFDKNAYV) lie on the Cytoplasmic side of the membrane.

The protein belongs to the claudin family. In terms of assembly, can form homodimers both in trans (interaction between CLDN10 molecules in opposing membranes) and in cis (interaction between CLDN10 molecules within one membrane). Interacts with CLDN19.

Its subcellular location is the cell junction. It localises to the tight junction. The protein localises to the cell membrane. It carries out the reaction Na(+)(in) = Na(+)(out). The catalysed reaction is Li(+)(in) = Li(+)(out). It catalyses the reaction K(+)(in) = K(+)(out). The enzyme catalyses Rb(+)(in) = Rb(+)(out). It carries out the reaction Cs(+)(in) = Cs(+)(out). The catalysed reaction is NH4(+)(in) = NH4(+)(out). It catalyses the reaction methylamine(out) = methylamine(in). The enzyme catalyses Mg(2+)(in) = Mg(2+)(out). It carries out the reaction Ca(2+)(in) = Ca(2+)(out). The catalysed reaction is Sr(2+)(in) = Sr(2+)(out). It catalyses the reaction chloride(in) = chloride(out). The enzyme catalyses nitrate(in) = nitrate(out). Its function is as follows. Forms paracellular channels: polymerizes in tight junction strands with cation- and anion-selective channels through the strands, conveying epithelial permeability in a process known as paracellular tight junction permeability. In sweat glands and in the thick ascending limb (TAL) of Henle's loop in kidney, it controls paracellular sodium permeability which is essential for proper sweat production and renal function. In renal proximal tubules, it conveys selective chloride over hydrogencarbonate anion permeability which is required for renal chloride reabsorption and salt homeostasis. The polypeptide is Claudin-10 (CLDN10) (Bos taurus (Bovine)).